The chain runs to 264 residues: Synaptophysin-like protein 2 (264 aa).

Topologically, residues 1–33 (MSSTESPGRTSDKSPRQQVDRLLLGLRWQRLEE) are cytoplasmic. An MARVEL domain is found at 30-238 (RLEEPLGFIK…NCWFVFKETP (209 aa)). A helical transmembrane segment spans residues 34–54 (PLGFIKVLQWLFAIFAFGSCG). Residues 55–116 (SYSGETGALV…LMGDFSAPAE (62 aa)) lie on the Vesicular side of the membrane. The helical transmembrane segment at 117-137 (FFVTLGIFSFFYTMAALVIYL) threads the bilayer. The Cytoplasmic portion of the chain corresponds to 138 to 150 (RFHKLYTENKRFP). The chain crosses the membrane as a helical span at residues 151-171 (LVDFCVTVSFTFFWLVAAAAW). Residues 172-213 (GKGLTDVKGATRPSSLTAAMSVCHGEEAVCSAGATPSMGLAN) lie on the Vesicular side of the membrane. Asparagine 213 is a glycosylation site (N-linked (GlcNAc...) asparagine). A helical transmembrane segment spans residues 214–234 (LSVLFGFINFFLWAGNCWFVF). The Cytoplasmic portion of the chain corresponds to 235–264 (KETPWHGQGQDQGQGPSQESAAEQGAVEKQ). The tract at residues 242–264 (QGQDQGQGPSQESAAEQGAVEKQ) is disordered.

Belongs to the synaptophysin/synaptobrevin family. As to expression, expressed abundantly in skeletal muscle and at lower levels in the kidney.

The protein resides in the membrane. Functionally, involved in communication between the T-tubular and junctional sarcoplasmic reticulum (SR) membranes. This Mus musculus (Mouse) protein is Synaptophysin-like protein 2 (Sypl2).